Reading from the N-terminus, the 1082-residue chain is Importin-4 (1082 aa).

Met1 carries the post-translational modification N-acetylmethionine. The Importin N-terminal domain occupies 24–90; the sequence is ATEQLQTILR…KSLVLTALQK (67 aa). 6 HEAT repeats span residues 348–385, 390–427, 431–471, 475–513, 896–933, and 937–975; these read KLCP…GAGD, RLLY…NLQP, SYSE…NLGP, PYLP…AAQD, QFVS…HGGC, and DHFP…ASPV.

This sequence belongs to the importin beta family. Found in a cytosolic complex with ASF1 (ASF1A or ASF1B) and histones H3 and H4.

Its subcellular location is the cytoplasm. It is found in the nucleus. Nuclear transport receptor that mediates nuclear import of proteins, such as histones, RPS3A, TNP2 and VDR. Serves as receptor for nuclear localization signals (NLS) in cargo substrates. Is thought to mediate docking of the importin/substrate complex to the nuclear pore complex (NPC) through binding to nucleoporin and the complex is subsequently translocated through the pore by an energy requiring, Ran-dependent mechanism. At the nucleoplasmic side of the NPC, Ran binds to the importin, the importin/substrate complex dissociates and importin is re-exported from the nucleus to the cytoplasm where GTP hydrolysis releases Ran. The directionality of nuclear import is thought to be conferred by an asymmetric distribution of the GTP- and GDP-bound forms of Ran between the cytoplasm and nucleus. Mediates the nuclear import of the histone H3-H4 dimer when in complex with ASF1 (ASF1A or ASF1B). Mediates the ligand-independent nuclear import of vitamin D receptor (VDR). The chain is Importin-4 (Ipo4) from Mus musculus (Mouse).